Here is a 310-residue protein sequence, read N- to C-terminus: Collagen-like protein V6 (310 aa).

A compositionally biased stretch (polar residues) spans 1 to 41; that stretch reads MSLSTLFSPNTYNINSKSQTLNNLPSNPTSQTNTLWSNNAY. Residues 1–183 are disordered; that stretch reads MSLSTLFSPN…GDPGAKGDPG (183 aa). 2 consecutive Collagen-like domains span residues 61–119 and 123–182; these read GQKG…KGQA and GLKG…KGDP. The segment covering 92-101 has biased composition (basic and acidic residues); that stretch reads SGDKGDKGDS. N-linked (GlcNAc...) asparagine; by host glycans are attached at residues N227 and N264.

The protein belongs to the sputnik virus V6 family.

The protein is Collagen-like protein V6 of Sputnik virophage.